A 214-amino-acid chain; its full sequence is Thymidylate kinase (214 aa).

Residue 12-19 coordinates ATP; the sequence is GGEGAGKS.

This sequence belongs to the thymidylate kinase family.

The enzyme catalyses dTMP + ATP = dTDP + ADP. Its function is as follows. Phosphorylation of dTMP to form dTDP in both de novo and salvage pathways of dTTP synthesis. This Gluconobacter oxydans (strain 621H) (Gluconobacter suboxydans) protein is Thymidylate kinase.